We begin with the raw amino-acid sequence, 173 residues long: Ribosome maturation factor RimM (173 aa).

Residues 92–165 (EGEFYHADLI…RVVIEAPAEI (74 aa)) enclose the PRC barrel domain.

The protein belongs to the RimM family. Binds ribosomal protein uS19.

The protein localises to the cytoplasm. An accessory protein needed during the final step in the assembly of 30S ribosomal subunit, possibly for assembly of the head region. Essential for efficient processing of 16S rRNA. May be needed both before and after RbfA during the maturation of 16S rRNA. It has affinity for free ribosomal 30S subunits but not for 70S ribosomes. This is Ribosome maturation factor RimM from Nitrobacter winogradskyi (strain ATCC 25391 / DSM 10237 / CIP 104748 / NCIMB 11846 / Nb-255).